We begin with the raw amino-acid sequence, 157 residues long: uncharacterized protein (157 aa).

One can recognise an N-acetyltransferase domain in the interval 9 to 154 (LLINYKTLDE…ETNLNAVTNE (146 aa)).

This is an uncharacterized protein from Bacillus cereus (strain B4264).